The primary structure comprises 73 residues: DNA-directed RNA polymerase subunit omega (73 aa).

The protein belongs to the RNA polymerase subunit omega family. In terms of assembly, the RNAP catalytic core consists of 2 alpha, 1 beta, 1 beta' and 1 omega subunit. When a sigma factor is associated with the core the holoenzyme is formed, which can initiate transcription.

The enzyme catalyses RNA(n) + a ribonucleoside 5'-triphosphate = RNA(n+1) + diphosphate. Functionally, promotes RNA polymerase assembly. Latches the N- and C-terminal regions of the beta' subunit thereby facilitating its interaction with the beta and alpha subunits. The chain is DNA-directed RNA polymerase subunit omega from Oleidesulfovibrio alaskensis (strain ATCC BAA-1058 / DSM 17464 / G20) (Desulfovibrio alaskensis).